Here is a 181-residue protein sequence, read N- to C-terminus: Probable Brix domain-containing ribosomal biogenesis protein (181 aa).

A Brix domain is found at 5-181; the sequence is CKVIITTSRE…RIKKVVYRHV (177 aa).

In terms of biological role, probably involved in the biogenesis of the ribosome. This chain is Probable Brix domain-containing ribosomal biogenesis protein, found in Pyrobaculum aerophilum (strain ATCC 51768 / DSM 7523 / JCM 9630 / CIP 104966 / NBRC 100827 / IM2).